Reading from the N-terminus, the 308-residue chain is Putative glutamine amidotransferase Rv2859c (308 aa).

Positions 1–62 (MDLSASRSDG…ASPRLRSPLG (62 aa)) are disordered. Low complexity-rich tracts occupy residues 13–24 (PLRPASPRLRSP), 31–42 (PLRPASPRLRSP), and 49–61 (PLRP…RSPL). Positions 78 to 301 (RTGVWDIPAG…VDAASGYAGR (224 aa)) constitute a Glutamine amidotransferase type-1 domain. The Nucleophile role is filled by cysteine 177. Catalysis depends on residues histidine 277 and glutamate 279. An Isoglutamyl lysine isopeptide (Lys-Gln) (interchain with Q-Cter in protein Pup) cross-link involves residue lysine 289.

The polypeptide is Putative glutamine amidotransferase Rv2859c (Mycobacterium tuberculosis (strain ATCC 25618 / H37Rv)).